Consider the following 215-residue polypeptide: uncharacterized protein (215 aa).

Belongs to the thiaminase-2 family.

This is an uncharacterized protein from Haemophilus influenzae (strain ATCC 51907 / DSM 11121 / KW20 / Rd).